Consider the following 301-residue polypeptide: Mitochondrial ornithine transporter 1 (301 aa).

Transmembrane regions (helical) follow at residues 5-25 (PAIQ…ACVL), 68-88 (SPAL…YGFC), 110-130 (AAAG…TELV), 168-188 (GFYH…FFFF), 207-227 (LGPV…WLAV), and 237-257 (IQVL…LSIV). 3 Solcar repeats span residues 7–91 (IQAA…CQQV), 104–197 (LSDL…SRSF), and 207–293 (LGPV…SRKL).

This sequence belongs to the mitochondrial carrier (TC 2.A.29) family. Widely expressed, with highest levels in the liver, testis and kidney. In the brain, expressed at high levels in the hypothalamus.

The protein resides in the mitochondrion inner membrane. It is found in the mitochondrion membrane. It catalyses the reaction L-citrulline(in) + L-ornithine(out) + H(+)(in) = L-citrulline(out) + L-ornithine(in) + H(+)(out). The enzyme catalyses L-ornithine(in) + L-arginine(out) = L-ornithine(out) + L-arginine(in). It carries out the reaction L-ornithine(out) + L-lysine(in) = L-ornithine(in) + L-lysine(out). The catalysed reaction is L-lysine(out) + H(+)(in) = L-lysine(in) + H(+)(out). It catalyses the reaction L-ornithine(out) + H(+)(in) = L-ornithine(in) + H(+)(out). With respect to regulation, inhibited by pyridoxal 5'-phosphate as well as by mercurials (mersalyl, p-chloromercuribenzene sulfonate, and mercuric chloride), N-ethylmaleimide and spermine. Its function is as follows. Mitochondrial ornithine-citrulline antiporter. Catalyzes the exchange between cytosolic ornithine and mitochondrial citrulline plus an H(+), the proton compensates the positive charge of ornithine thus leading to an electroneutral transport. Plays a crucial role in the urea cycle, by connecting the cytosolic and the intramitochondrial reactions of the urea cycle. Lysine and arginine are also transported by the antiport mechanism. In addition, catalyzes an electroneutral exchange of ornithine or lysine for H(+), a reaction driven by the pH gradient across the inner membrane. The polypeptide is Mitochondrial ornithine transporter 1 (Mus musculus (Mouse)).